We begin with the raw amino-acid sequence, 540 residues long: CTP synthase (540 aa).

The segment at 1-266 (MAVKYIFVTG…LTPIARHLEL (266 aa)) is amidoligase domain. S14 provides a ligand contact to CTP. S14 lines the UTP pocket. ATP is bound by residues 15-20 (SLGKGI) and D72. Mg(2+) is bound by residues D72 and E140. CTP-binding positions include 147 to 149 (DIE), 187 to 192 (KTKPTQ), and K223. UTP is bound by residues 187–192 (KTKPTQ) and K223. The Glutamine amidotransferase type-1 domain maps to 291-540 (TIGFVGKYLS…VKETLAHKKT (250 aa)). G351 serves as a coordination point for L-glutamine. C378 functions as the Nucleophile; for glutamine hydrolysis in the catalytic mechanism. Residues 379–382 (LGMQ), E402, and R470 each bind L-glutamine. Active-site residues include H513 and E515.

It belongs to the CTP synthase family. In terms of assembly, homotetramer.

It catalyses the reaction UTP + L-glutamine + ATP + H2O = CTP + L-glutamate + ADP + phosphate + 2 H(+). The enzyme catalyses L-glutamine + H2O = L-glutamate + NH4(+). It carries out the reaction UTP + NH4(+) + ATP = CTP + ADP + phosphate + 2 H(+). Its pathway is pyrimidine metabolism; CTP biosynthesis via de novo pathway; CTP from UDP: step 2/2. Its activity is regulated as follows. Allosterically activated by GTP, when glutamine is the substrate; GTP has no effect on the reaction when ammonia is the substrate. The allosteric effector GTP functions by stabilizing the protein conformation that binds the tetrahedral intermediate(s) formed during glutamine hydrolysis. Inhibited by the product CTP, via allosteric rather than competitive inhibition. Its function is as follows. Catalyzes the ATP-dependent amination of UTP to CTP with either L-glutamine or ammonia as the source of nitrogen. Regulates intracellular CTP levels through interactions with the four ribonucleotide triphosphates. The sequence is that of CTP synthase from Helicobacter hepaticus (strain ATCC 51449 / 3B1).